The chain runs to 98 residues: MSADPRHYDIIVSPVITEKATNLTEQNKVVFRVAPKATKPQIKEAVERLFDVKVTGVNTLTTKGKKKFFRGQRGQRSDVKKAIVTLAEGDTIDVTTGL.

It belongs to the universal ribosomal protein uL23 family. Part of the 50S ribosomal subunit. Contacts protein L29, and trigger factor when it is bound to the ribosome.

In terms of biological role, one of the early assembly proteins it binds 23S rRNA. One of the proteins that surrounds the polypeptide exit tunnel on the outside of the ribosome. Forms the main docking site for trigger factor binding to the ribosome. The protein is Large ribosomal subunit protein uL23 of Methylorubrum extorquens (strain CM4 / NCIMB 13688) (Methylobacterium extorquens).